The sequence spans 82 residues: Small ribosomal subunit protein bS18 (82 aa).

It belongs to the bacterial ribosomal protein bS18 family. As to quaternary structure, part of the 30S ribosomal subunit. Forms a tight heterodimer with protein bS6.

Functionally, binds as a heterodimer with protein bS6 to the central domain of the 16S rRNA, where it helps stabilize the platform of the 30S subunit. This Sinorhizobium fredii (strain NBRC 101917 / NGR234) protein is Small ribosomal subunit protein bS18.